The chain runs to 219 residues: MLRGLRIIAENKIGVLRDLTTIIAEEGGNITFAQTFLIKHGEHEGKALIYFEIEGGDFEKILERVKTFDYIIEIEEEESFERVFGKRVIILGGGALVSQVAIGAISEADRHNLRGERISVDTMPVVGEEEIAEAVKAVSRLHRAEVLVLAGGIMGGKITEEVKKLRKSGIRVISLSMFGSVPDVADVVISDPVMAGTLAVMHISEKAKFDLDRVKGRRI.

The 76-residue stretch at glycine 4–serine 79 folds into the ACT domain.

This is an uncharacterized protein from Archaeoglobus fulgidus (strain ATCC 49558 / DSM 4304 / JCM 9628 / NBRC 100126 / VC-16).